The chain runs to 84 residues: Minor capsid protein P30 (84 aa).

Dimer.

It is found in the virion. In terms of biological role, minor capsid protein essential for stable capsid assembly of complete particles. This is Minor capsid protein P30 (XXX) from Enterobacteria phage PRD1 (Bacteriophage PRD1).